The primary structure comprises 220 residues: Exodeoxyribonuclease 10 (220 aa).

Mg(2+) serves as cofactor.

In terms of biological role, capable of degrading both single-strand and double-strand DNA with 3' to 5' polarity. Has higher affinity for ssDNA ends than for dsDNA. This Escherichia coli O6:H1 (strain CFT073 / ATCC 700928 / UPEC) protein is Exodeoxyribonuclease 10 (exoX).